The following is a 378-amino-acid chain: Ribosomal RNA large subunit methyltransferase G (378 aa).

This sequence belongs to the methyltransferase superfamily. RlmG family.

It is found in the cytoplasm. It catalyses the reaction guanosine(1835) in 23S rRNA + S-adenosyl-L-methionine = N(2)-methylguanosine(1835) in 23S rRNA + S-adenosyl-L-homocysteine + H(+). Its function is as follows. Specifically methylates the guanine in position 1835 (m2G1835) of 23S rRNA. This chain is Ribosomal RNA large subunit methyltransferase G, found in Shewanella baltica (strain OS155 / ATCC BAA-1091).